The chain runs to 133 residues: MAQMMTLSLLSLVLALCIPWTQGSDGGGQDCCLKYSQKKIPYSIVRGYRKQEPSLGCPIPAILFSPRKHSKPELCANPEEGWVQNLMRRLDQPPAPGKQSPGCRKNRGTSKSGKKGKGSKGCKRTEQTQPSRG.

An N-terminal signal peptide occupies residues 1-23 (MAQMMTLSLLSLVLALCIPWTQG). 3 disulfides stabilise this stretch: Cys-31–Cys-57, Cys-32–Cys-75, and Cys-103–Cys-122. The tract at residues 86-133 (LMRRLDQPPAPGKQSPGCRKNRGTSKSGKKGKGSKGCKRTEQTQPSRG) is disordered. A C-terminal basic extension region spans residues 98-133 (KQSPGCRKNRGTSKSGKKGKGSKGCKRTEQTQPSRG). A compositionally biased stretch (basic residues) spans 104–122 (RKNRGTSKSGKKGKGSKGC).

The protein belongs to the intercrine beta (chemokine CC) family. In terms of assembly, binds to CCR7 and to CXCR3. Interacts with PDPN; relocalizes PDPN to the basolateral membrane. Interacts with GPR174. Expressed strongly in lung, spleen, thymus, peripheral and mesentric lymph nodes. Also expressed in the testis, kidney, liver, and heart.

It localises to the secreted. In terms of biological role, inhibits hemopoiesis and stimulates chemotaxis. Chemotactic in vitro for thymocytes and activated T-cells, but not for B-cells, macrophages, or neutrophils. Potent mesangial cell chemoattractant. Shows preferential activity towards naive T-cells. May play a role in mediating homing of lymphocytes to secondary lymphoid organs. The chain is C-C motif chemokine 21a (Ccl21a) from Mus musculus (Mouse).